A 65-amino-acid polypeptide reads, in one-letter code: Large ribosomal subunit protein bL35 (65 aa).

The protein belongs to the bacterial ribosomal protein bL35 family.

This is Large ribosomal subunit protein bL35 from Rhodospirillum rubrum (strain ATCC 11170 / ATH 1.1.1 / DSM 467 / LMG 4362 / NCIMB 8255 / S1).